Consider the following 236-residue polypeptide: 2-C-methyl-D-erythritol 4-phosphate cytidylyltransferase (236 aa).

The protein belongs to the IspD/TarI cytidylyltransferase family. IspD subfamily.

The enzyme catalyses 2-C-methyl-D-erythritol 4-phosphate + CTP + H(+) = 4-CDP-2-C-methyl-D-erythritol + diphosphate. Its pathway is isoprenoid biosynthesis; isopentenyl diphosphate biosynthesis via DXP pathway; isopentenyl diphosphate from 1-deoxy-D-xylulose 5-phosphate: step 2/6. Catalyzes the formation of 4-diphosphocytidyl-2-C-methyl-D-erythritol from CTP and 2-C-methyl-D-erythritol 4-phosphate (MEP). This Burkholderia multivorans (strain ATCC 17616 / 249) protein is 2-C-methyl-D-erythritol 4-phosphate cytidylyltransferase.